The primary structure comprises 343 residues: Ubiquitin thioesterase OTU1 (343 aa).

The segment at 45–123 (RCKAKGGTHL…IVEEDQTRPK (79 aa)) is UBX-like. The 126-residue stretch at 144–269 (LTRTAVPADN…GIHYDPLQRN (126 aa)) folds into the OTU domain. The segment at 149 to 155 (VPADNSC) is cys-loop. Aspartate 152 is an active-site residue. Catalysis depends on cysteine 155, which acts as the Nucleophile. Residues 208–218 (IRRDDTWGGAI) form a variable-loop region. The interval 258–262 (YDGIH) is his-loop. Residue isoleucine 261 coordinates substrate. Residue histidine 262 is part of the active site. The segment at 286–291 (DIVLVQ) is S2 site. Residues 313-337 (LRCMICQKGLTGQAEARDHARETGH) form a C2H2-type zinc finger. The active site involves histidine 337.

Interacts with VCP; the interaction is direct. Interacts with FAF2/UBXD8. Interacts with DERL1; however interaction is dependent on the UBAX-like region, suggesting that it may be indirect. Interacts with PLAA, UBXN6 and VCP; may form a complex involved in macroautophagy.

It is found in the cytoplasm. The catalysed reaction is Thiol-dependent hydrolysis of ester, thioester, amide, peptide and isopeptide bonds formed by the C-terminal Gly of ubiquitin (a 76-residue protein attached to proteins as an intracellular targeting signal).. In terms of biological role, hydrolase that can remove conjugated ubiquitin from proteins and participates in endoplasmic reticulum-associated degradation (ERAD) for misfolded lumenal proteins. May act by triming the ubiquitin chain on the associated substrate to facilitate their threading through the VCP/p97 pore. Ubiquitin moieties on substrates may present a steric impediment to the threading process when the substrate is transferred to the VCP pore and threaded through VCP's axial channel. Mediates deubiquitination of 'Lys-27'-, 'Lys-29'- and 'Lys-33'-linked polyubiquitin chains. Also able to hydrolyze 'Lys-11'-linked ubiquitin chains. Cleaves both polyubiquitin and di-ubiquitin. May play a role in macroautophagy, regulating for instance the clearance of damaged lysosomes. May recruit PLAA, UBXN6 and VCP to damaged lysosome membranes decorated with K48-linked ubiquitin chains and remove these chains allowing autophagosome formation. The protein is Ubiquitin thioesterase OTU1 (Yod1) of Mus musculus (Mouse).